The chain runs to 507 residues: MNKDINIAAIIKNEIENFEGKIQNHDIGKVIIVGDGVALVSGIEKVKFGELVEFENNVLGIALNLEQDLIGVVIMASENSVFQGSIVRRTKSVISITVGDQLLGRVVNALGIPIDGKAELDNSLKSAIFTNAPSIMDRKSVDRGLKTGILAIDSLVPIGKGQRELIIGDRQTGKTTIAIDAILNQKGKDVYCVYVAIGQKNSSVAQIVSLLEKKGALEYTTVILAGASELSPLQYLAPYSGAAIAEYWMNKKKDVLIIYDDLSKHAIAYRTLSLLLRRPPGREAFPGDIFYQHSYLLERSAQLSNDKGGGSITALPIIETQAGDISAYIPTNVISITDGQIFLRDSLFNSGQKPAIDIGLSVSRVGSAAQTNLMKWASSSLKLNLAQYNELKAFAQFGSDLGPSSQLILDRGNKIYEILKQENQYPLTERQQIMLLILIRENLIDSLEQKSIPLFKSAFLKYCDSEPKFRDKIEKMDYNRVLEPNNLAGILKDITDFIEKFNLGNVF.

168–175 (GDRQTGKT) provides a ligand contact to ATP.

This sequence belongs to the ATPase alpha/beta chains family. F-type ATPases have 2 components, CF(1) - the catalytic core - and CF(0) - the membrane proton channel. CF(1) has five subunits: alpha(3), beta(3), gamma(1), delta(1), epsilon(1). CF(0) has three main subunits: a(1), b(2) and c(9-12). The alpha and beta chains form an alternating ring which encloses part of the gamma chain. CF(1) is attached to CF(0) by a central stalk formed by the gamma and epsilon chains, while a peripheral stalk is formed by the delta and b chains.

The protein resides in the cell membrane. The enzyme catalyses ATP + H2O + 4 H(+)(in) = ADP + phosphate + 5 H(+)(out). Functionally, produces ATP from ADP in the presence of a proton gradient across the membrane. The alpha chain is a regulatory subunit. The protein is ATP synthase subunit alpha of Mesomycoplasma hyopneumoniae (strain J / ATCC 25934 / NCTC 10110) (Mycoplasma hyopneumoniae).